The sequence spans 680 residues: Extracellular matrix protein 2 (680 aa).

A signal peptide spans 1–20; the sequence is MKFSSLYCFLLLLIFQTDFG. One can recognise a VWFC domain in the interval 100-157; the sequence is GHCLANGMIMYNKAVWSPEPCTTCLCLNGKVLCDETKCHPQMCPQTIIPEGECCPVCS. The segment covering 189 to 198 has biased composition (acidic residues); the sequence is QLEEDEEEVK. The disordered stretch occupies residues 189 to 293; that stretch reads QLEEDEEEVK…RLPIPATPRG (105 aa). Residues 223-238 are compositionally biased toward basic and acidic residues; the sequence is QSREGKAQRPEEEGRQ. The span at 249 to 272 shows a compositional bias: acidic residues; it reads NEEDDDEEEEDDDDEEEDDDDEDE. The short motif at 275 to 277 is the Cell attachment site element; sequence RGD. Residues 288–325 enclose the LRRNT domain; sequence PATPRGIPSLPSMCSLSYKTISCISADLTQIPPLTAPE. 13 LRR repeats span residues 349–369, 375–396, 397–417, 420–440, 446–466, 467–488, 491–511, 517–538, 539–559, 563–583, 590–611, 613–634, and 642–665; these read NLERLDLSKNNITSSGIGPKA, NLMRLNMDGNNLVTIPSELPST, LEELKINENKLQVIDEESLSD, QLVTLELEGNNLSETNVNSLA, SLSYLRLGRNKFRIIPQGLPA, SIEELYLENNQIEEITEISFNH, KINVIGLRYNKIEENRIAPLA, NLESIDLSYNKLYHVPSYLPKS, LVHLVLIGNQIERIPGYVFGH, GLEYLYLSFNKLVDDGIDRVS, SLRELFLDHNELKSIPPGVQEM, ALHFLRLNNNKIRNILPEQICN, and NLQHLHLENNYIKTREIPSYAFSC. Asn359 carries N-linked (GlcNAc...) asparagine glycosylation. An N-linked (GlcNAc...) asparagine glycan is attached at Asn430. N-linked (GlcNAc...) asparagine glycosylation occurs at Asn487.

It belongs to the small leucine-rich proteoglycan (SLRP) family. SLRP class I subfamily. In terms of assembly, interacts with numerous extracellular matrix proteins. Interacts with MSL1 and RASSF1.

It localises to the secreted. The protein resides in the extracellular space. The protein localises to the extracellular matrix. In terms of biological role, promotes matrix assembly and cell adhesiveness. The polypeptide is Extracellular matrix protein 2 (ECM2) (Bos taurus (Bovine)).